The primary structure comprises 1021 residues: Sodium/potassium-transporting ATPase subunit alpha-1 (1021 aa).

Positions 1 to 5 are excised as a propeptide; sequence MGKGA. Residues 1–11 are compositionally biased toward basic and acidic residues; it reads MGKGAGRDKYE. Residues 1–31 are disordered; sequence MGKGAGRDKYEPTATSEHGTKKKKAKERDMD. At 6-85 the chain is on the cytoplasmic side; that stretch reads GRDKYEPTAT…NTLTPPPTTP (80 aa). At Tyr10 the chain carries Phosphotyrosine. At Ser16 the chain carries Phosphoserine; by PKC. The segment at 80–82 is phosphoinositide-3 kinase binding; sequence PPP. The helical transmembrane segment at 86-106 threads the bilayer; the sequence is EWVKFCRQLFGGFSLLLWIGS. Residues 107–129 are Extracellular-facing; sequence LLCFLAYGITSVMEGEPNSDNLY. Residues 130 to 150 traverse the membrane as a helical segment; it reads LGVVLAAVVIITGCFSYYQEA. The Cytoplasmic segment spans residues 151–286; it reads KSSKIMESFK…GGKTPIAMEI (136 aa). The disordered stretch occupies residues 214-233; it reads SSLTGESEPQTRSPDFSNEN. A helical membrane pass occupies residues 287-306; sequence EHFIHLITGVAVFLGVSFFI. The Extracellular segment spans residues 307 to 318; it reads LSLILEYTWLEA. Residues 319–336 traverse the membrane as a helical segment; that stretch reads VIFLIGIIVANVPEGLLA. Over 337–770 the chain is Cytoplasmic; that stretch reads TVTVCLTLTA…EEGRLIFDNL (434 aa). Asp374 (4-aspartylphosphate intermediate) is an active-site residue. Lys485 is an ATP binding site. The Mg(2+) site is built by Asp715 and Asp719. A helical transmembrane segment spans residues 771–790; it reads KKSIAYTLTSNIPEITPFLI. At 791-800 the chain is on the extracellular side; that stretch reads FIIANIPLPL. The helical transmembrane segment at 801-821 threads the bilayer; that stretch reads GTCTILCIDLGTDMVPAISLA. Residues 822 to 841 lie on the Cytoplasmic side of the membrane; that stretch reads YEQAESDIMKRQPRNPKTDK. Residues 842 to 864 traverse the membrane as a helical segment; sequence LVNERLISMAYGQIGMIQALGGF. At 865 to 916 the chain is on the extracellular side; sequence FTYFVIMAENGFLPSGLVGIRLQWDDRWINDVEDSYGQQWTFEQRKIVEFTC. A helical membrane pass occupies residues 917-936; that stretch reads HTAFFVSIVVVQWADLIICK. Residues 937-949 lie on the Cytoplasmic side of the membrane; it reads TRRNSVFQQGMKN. At Ser941 the chain carries Phosphoserine; by PKA. A helical membrane pass occupies residues 950-968; that stretch reads KILIFGLFEETALAAFLSY. Residues 969 to 983 are Extracellular-facing; that stretch reads CPGMDVALRMYPLKP. A helical transmembrane segment spans residues 984–1004; sequence TWWFCAFPYSLLIFLYDEIRK. The Cytoplasmic segment spans residues 1005–1021; it reads LIIRRNPGGWVERETYY.

It belongs to the cation transport ATPase (P-type) (TC 3.A.3) family. Type IIC subfamily. The sodium/potassium-transporting ATPase is composed of a catalytic alpha subunit, an auxiliary non-catalytic beta subunit and an additional regulatory subunit. Post-translationally, phosphorylation on Tyr-10 modulates pumping activity.

The protein localises to the cell membrane. It localises to the sarcolemma. The enzyme catalyses K(+)(out) + Na(+)(in) + ATP + H2O = K(+)(in) + Na(+)(out) + ADP + phosphate + H(+). In terms of biological role, this is the catalytic component of the active enzyme, which catalyzes the hydrolysis of ATP coupled with the exchange of sodium and potassium ions across the plasma membrane. This action creates the electrochemical gradient of sodium and potassium ions, providing the energy for active transport of various nutrients. The polypeptide is Sodium/potassium-transporting ATPase subunit alpha-1 (ATP1A1) (Gallus gallus (Chicken)).